Consider the following 1306-residue polypeptide: Activating transcription factor 7-interacting protein 1 (1306 aa).

The residue at position 1 (methionine 1) is an N-acetylmethionine. Residues 1–23 are disordered; the sequence is MDSVEEPQKKVFKARKTMRASDR. Lysine 33 is covalently cross-linked (Glycyl lysine isopeptide (Lys-Gly) (interchain with G-Cter in SUMO2)). 2 positions are modified to phosphoserine: serine 57 and serine 112. Disordered regions lie at residues 104 to 470, 496 to 604, 689 to 722, 765 to 785, 871 to 895, 920 to 1060, and 1152 to 1196; these read EDLN…SMET, LPVE…SKRR, AAKDDLKKRQESPPNPPISPGKPANDTNSNNNMT, VVSSQPKLQTSATSGSLPAAP, PLPNPTKPNIPSVPSPSSIQRNSST, RTSL…GPSQ, and AGPQ…STSL. Composition is skewed to polar residues over residues 109-134 and 143-162; these read EALSPSITCDLSSRVTTEPGSGSPAS and VSDNPASDNPASDNPASDNP. Threonine 124 carries the post-translational modification Phosphothreonine. 3 stretches are compositionally biased toward low complexity: residues 185–212, 246–261, and 284–303; these read EEPPSSDPSSSDPTSSEPSSSEPTCSEP, EAASSEPATSEPASDE, and PSGDSQSDEPPSSEDSLPRS. Over residues 432–441 the composition is skewed to basic and acidic residues; it reads QSEKDEHKSP. 4 positions are modified to phosphoserine: serine 511, serine 514, serine 516, and serine 533. The segment covering 513-523 has biased composition (polar residues); it reads GSPSKQESSEN. Basic and acidic residues-rich tracts occupy residues 557-566, 592-601, and 689-699; these read EGEKSEKDGK, KSEDMDSVES, and AAKDDLKKRQE. A Nuclear localization signal motif is present at residues 587–605; the sequence is RRKRSKSEDMDSVESKRRR. Lysine 592 participates in a covalent cross-link: Glycyl lysine isopeptide (Lys-Gly) (interchain with G-Cter in SUMO2). Phosphoserine is present on serine 593. The segment at 596-851 is interaction with SETDB1; that stretch reads MDSVESKRRR…NQPSGNVEFI (256 aa). Residues 666-696 are a coiled coil; it reads NKRHKAVLTELQAKIARLTKRFGAAKDDLKK. A phosphoserine mark is found at serine 700 and serine 707. Positions 713-722 are enriched in polar residues; that stretch reads NDTNSNNNMT. A compositionally biased stretch (pro residues) spans 871 to 884; the sequence is PLPNPTKPNIPSVP. Position 933 is a phosphoserine (serine 933). Glycyl lysine isopeptide (Lys-Gly) (interchain with G-Cter in SUMO2) cross-links involve residues lysine 944 and lysine 974. Over residues 948–981 the composition is skewed to polar residues; it reads STFSPPSSAEQNSSATPRIVTENQTNKTVDSSIN. Low complexity predominate over residues 987–1000; the sequence is STSQSGKASSSDSS. Residues 1001 to 1011 are interaction with SUMO; sequence GVIDLTMDDEE. Over residues 1022–1040 the composition is skewed to low complexity; it reads SPPSSSTVSTSQPMSRPLQ. One can recognise a Fibronectin type-III 1 domain in the interval 1054 to 1143; it reads PTSGPSQATI…RVPQTTTYVV (90 aa). Residues 1170-1187 are compositionally biased toward pro residues; that stretch reads PRPLHPAPLPEAPQPQRL. Residues 1190-1306 form an interaction with MBD1 region; the sequence is EAASTSLPQK…TDVISSSQNS (117 aa). The Fibronectin type-III 2 domain occupies 1196 to 1302; it reads LPQKPHLKLA…DPQSTDVISS (107 aa).

It belongs to the MCAF family. Interacts with MBD1; the interaction is enhanced when MBD1 is sumoylated. Interacts with SETDB1; the interaction protects SETDB1 from proteasomal degradation and is required to stimulate histone methyltransferase activity and facilitate the conversion of dimethylated to trimethylated H3 'Lys-9'. Interacts with SUMO ubiquitin-like proteins (SUMO1, SUNO2 and SUMO3), with a preference for SUMO2 and SUMO3. Interacts with SP1, ATF7 and ZHX1. Interacts with the general transcription machinery, including ERCC2, ERCC3, GTF2E1, GTF2E2 and POLR2A. Ubiquitously expressed at all stages studied.

It is found in the nucleus. Recruiter that couples transcriptional factors to general transcription apparatus and thereby modulates transcription regulation and chromatin formation. Can both act as an activator or a repressor depending on the context. Required for HUSH-mediated heterochromatin formation and gene silencing. Mediates MBD1-dependent transcriptional repression, probably by recruiting complexes containing SETDB1. Stabilizes SETDB1, is required to stimulate histone methyltransferase activity of SETDB1 and facilitates the conversion of dimethylated to trimethylated H3 'Lys-9' (H3K9me3). The complex formed with MBD1 and SETDB1 represses transcription and couples DNA methylation and histone H3 'Lys-9' trimethylation (H3K9me3). Facilitates telomerase TERT and TERC gene expression by SP1 in cancer cells. The polypeptide is Activating transcription factor 7-interacting protein 1 (Atf7ip) (Mus musculus (Mouse)).